The primary structure comprises 309 residues: uncharacterized protein (309 aa).

Residues 17–254 (RYGQKVHKLT…AGEMIRHTPP (238 aa)) enclose the Radical SAM core domain. Cys-33, Cys-45, and Cys-48 together coordinate [4Fe-4S] cluster.

Belongs to the radical SAM superfamily. It depends on [4Fe-4S] cluster as a cofactor.

This is an uncharacterized protein from Escherichia coli O157:H7.